Reading from the N-terminus, the 289-residue chain is Heme oxygenase 1 (289 aa).

Positions 1-12 are enriched in polar residues; sequence MERPQPDSSMPQ. The tract at residues 1–24 is disordered; the sequence is MERPQPDSSMPQDLSEALKEATKE. Topologically, residues 1–266 are cytoplasmic; the sequence is MERPQPDSSM…KPQPSVLSQA (266 aa). Heme b contacts are provided by Lys-19, His-26, Tyr-135, and Arg-184. The interval 239–261 is disordered; that stretch reads RRAGSKVQDLAPTKASRGKPQPS. Ser-243 carries the phosphoserine modification. Residues 267–289 form a helical; Anchor for type IV membrane protein membrane-spanning segment; that stretch reads PLLRWVLTLSFLVATVAVGLYAM.

It belongs to the heme oxygenase family. As to quaternary structure, homodimer and higher order homooligomer. Oligomerization is crucial for its stability and function in the endoplasmic reticulum. Interacts with FLVCR2; this interaction is potentiated in the presence of heme. Post-translationally, a soluble form arises by proteolytic removal of the membrane anchor.

The protein resides in the endoplasmic reticulum membrane. The enzyme catalyses heme b + 3 reduced [NADPH--hemoprotein reductase] + 3 O2 = biliverdin IXalpha + CO + Fe(2+) + 3 oxidized [NADPH--hemoprotein reductase] + 3 H2O + H(+). With respect to regulation, inhibited by metalloporphyrins such as Sn-, Co-, Mn- and Zn-protoporphyrins. Catalyzes the oxidative cleavage of heme at the alpha-methene bridge carbon, released as carbon monoxide (CO), to generate biliverdin IXalpha, while releasing the central heme iron chelate as ferrous iron. Affords protection against programmed cell death and this cytoprotective effect relies on its ability to catabolize free heme and prevent it from sensitizing cells to undergo apoptosis. Its function is as follows. Catalyzes the oxidative cleavage of heme at the alpha-methene bridge carbon, released as carbon monoxide (CO), to generate biliverdin IXalpha, while releasing the central heme iron chelate as ferrous iron. In Bos taurus (Bovine), this protein is Heme oxygenase 1 (HMOX1).